The chain runs to 189 residues: Large ribosomal subunit protein bL25 (189 aa).

This sequence belongs to the bacterial ribosomal protein bL25 family. CTC subfamily. Part of the 50S ribosomal subunit; part of the 5S rRNA/L5/L18/L25 subcomplex. Contacts the 5S rRNA. Binds to the 5S rRNA independently of L5 and L18.

This is one of the proteins that binds to the 5S RNA in the ribosome where it forms part of the central protuberance. This is Large ribosomal subunit protein bL25 from Azobacteroides pseudotrichonymphae genomovar. CFP2.